A 1242-amino-acid polypeptide reads, in one-letter code: Structural polyprotein (1242 aa).

The necessary for nucleocapsid assembly and virus assembly stretch occupies residues 1–36; it reads MFPYPTLNYSPMAPVNPMAYRDPNPPRRRWRPFRPP. The segment at 1–104 is disordered; sequence MFPYPTLNYS…KQKPGKRQRM (104 aa). The tract at residues 37–70 is host transcription inhibition; the sequence is LAAQIEDLRRSIANLTFKQRAPNPPAGPPAKRKK. The short motif at 44–51 is the Supraphysiological nuclear export signal element; sequence LRRSIANL. Residues 66 to 104 show a composition bias toward basic residues; that stretch reads AKRKKPAPKPKPAAPKKKRQPPPAKKQKRKQKPGKRQRM. The Nuclear localization signal motif lies at 67–70; that stretch reads KRKK. The binding to the viral RNA stretch occupies residues 83 to 113; it reads KRQPPPAKKQKRKQKPGKRQRMCMKLESDKT. Residues 98-112 are ribosome-binding; it reads PGKRQRMCMKLESDK. The residue at position 110 (serine 110) is a Phosphoserine. The 150-residue stretch at 112-261 folds into the Peptidase S3 domain; the sequence is KTFPILLNGQ…KDTPEGSEPW (150 aa). Threonine 113 is subject to Phosphothreonine. Catalysis depends on charge relay system residues histidine 138, aspartate 160, and serine 212. A functions as an uncleaved signal peptide for the precursor of protein E3/E2 region spans residues 262 to 273; the sequence is SLTTVMCVLANI. Residue asparagine 272 is glycosylated (N-linked (GlcNAc...) asparagine; by host). The Extracellular portion of the chain corresponds to 325–688; it reads DLETHFTQYK…YYYNRYPMTT (364 aa). The chain crosses the membrane as a helical span at residues 689-709; that stretch reads IVGLCTCAAIIMVSCITSVWL. Residues 710–744 lie on the Cytoplasmic side of the membrane; it reads LCRTRNLCITPYRLAPNAQVPILLAVLCCVKPTRA. S-palmitoyl cysteine; by host attachment occurs at residues cysteine 717, cysteine 737, and cysteine 738. The transient transmembrane before p62-6K protein processing stretch occupies residues 717–737; sequence CITPYRLAPNAQVPILLAVLC. Residues 745–759 lie on the Extracellular side of the membrane; that stretch reads DDTLQVLNYLWNNNQ. Transmembrane regions (helical) follow at residues 760-780 and 781-801; these read NFFW…MRML and RCLL…GAAA. Residues 802–1218 lie on the Extracellular side of the membrane; it reads YEHTAVMPNK…WSWLKVLVGS (417 aa). 8 disulfides stabilise this stretch: cysteine 850/cysteine 915, cysteine 863/cysteine 895, cysteine 864/cysteine 897, cysteine 869/cysteine 879, cysteine 1061/cysteine 1073, cysteine 1103/cysteine 1178, cysteine 1108/cysteine 1182, and cysteine 1130/cysteine 1172. Residues 885–902 form an E1 fusion peptide loop region; the sequence is VYPFMWGGAYCFCDTENT. A helical membrane pass occupies residues 1219–1239; that stretch reads TSAFIVLGLIATAVVALVLFT. The Cytoplasmic segment spans residues 1240 to 1242; that stretch reads HKH.

Part of a tetrameric complex composed of host CRM1, host importin alpha/beta dimer and the viral capsid; this complex blocks the receptor-mediated transport through the nuclear pore. Interacts with host phosphatase PPP1CA; this interaction dephosphorylates the capsid protein, which increases its ability to bind to the viral genome. Interacts with host karyopherin KPNA4; this interaction allows the nuclear import of the viral capsid protein. Interacts with spike glycoprotein E2. Interacts with host IRAK1; the interaction leads to inhibition of IRAK1-dependent signaling. As to quaternary structure, the precursor of protein E3/E2 and E1 form a heterodimer shortly after synthesis. In terms of assembly, the precursor of protein E3/E2 and E1 form a heterodimer shortly after synthesis. Processing of the precursor of protein E3/E2 into E2 and E3 results in a heterodimer of the spike glycoproteins E2 and E1. Spike at virion surface are constituted of three E2-E1 heterodimers. After target cell attachment and endocytosis, E1 change conformation to form homotrimers. Interacts with 6K protein. Processing of the precursor of protein E3/E2 into E2 and E3 results in a heterodimer of the spike glycoproteins E2 and E1. Spike at virion surface are constituted of three E2-E1 heterodimers. Interacts with 6K protein. As to quaternary structure, interacts with spike glycoprotein E1. Interacts with spike glycoprotein E2. Structural polyprotein: Specific enzymatic cleavages in vivo yield mature proteins. Capsid protein is auto-cleaved during polyprotein translation, unmasking a signal peptide at the N-terminus of the precursor of E3/E2. The remaining polyprotein is then targeted to the host endoplasmic reticulum, where host signal peptidase cleaves it into pE2, 6K and E1 proteins. pE2 is further processed to mature E3 and E2 by host furin in trans-Golgi vesicle. Post-translationally, phosphorylated on serine and threonine residues. In terms of processing, palmitoylated via thioester bonds. These palmitoylations may induce disruption of the C-terminus transmembrane. This would result in the reorientation of E2 C-terminus from lumenal to cytoplasmic side. N-glycosylated. Post-translationally, palmitoylated via thioester bonds.

The protein localises to the virion. It localises to the host cytoplasm. Its subcellular location is the host cell membrane. The protein resides in the host nucleus. It is found in the virion membrane. It catalyses the reaction Autocatalytic release of the core protein from the N-terminus of the togavirus structural polyprotein by hydrolysis of a -Trp-|-Ser- bond.. In terms of biological role, forms an icosahedral capsid with a T=4 symmetry composed of 240 copies of the capsid protein surrounded by a lipid membrane through which penetrate 80 spikes composed of trimers of E1-E2 heterodimers. The capsid protein binds to the viral RNA genome at a site adjacent to a ribosome binding site for viral genome translation following genome release. Possesses a protease activity that results in its autocatalytic cleavage from the nascent structural protein. Following its self-cleavage, the capsid protein transiently associates with ribosomes, and within several minutes the protein binds to viral RNA and rapidly assembles into icosahedric core particles. The resulting nucleocapsid eventually associates with the cytoplasmic domain of the spike glycoprotein E2 at the cell membrane, leading to budding and formation of mature virions. In case of infection, new virions attach to target cells and after clathrin-mediated endocytosis their membrane fuses with the host endosomal membrane. This leads to the release of the nucleocapsid into the cytoplasm, followed by an uncoating event necessary for the genomic RNA to become accessible. The uncoating might be triggered by the interaction of capsid proteins with ribosomes. Binding of ribosomes would release the genomic RNA since the same region is genomic RNA-binding and ribosome-binding. Specifically inhibits interleukin-1 receptor-associated kinase 1/IRAK1-dependent signaling during viral entry, representing a means by which the alphaviruses may evade innate immune detection and activation prior to viral gene expression. Inhibits host transcription. Forms a tetrameric complex with XPO1/CRM1 and the nuclear import receptor importin. This complex blocks the central channel of host nuclear pores thereby inhibiting the receptor-mediated nuclear transport and thus the host mRNA and rRNA transcription. The inhibition of transcription is linked to a cytopathic effect on the host cell. Provides the signal sequence for the translocation of the precursor of protein E3/E2 to the host endoplasmic reticulum. Furin-cleaved E3 remains associated with spike glycoprotein E1 and mediates pH protection of the latter during the transport via the secretory pathway. After virion release from the host cell, the assembly protein E3 is gradually released in the extracellular space. Functionally, plays a role in viral attachment to target host cell, by binding to the cell receptor. Synthesized as a p62 precursor which is processed by furin at the cell membrane just before virion budding, giving rise to E2-E1 heterodimer. The p62-E1 heterodimer is stable, whereas E2-E1 is unstable and dissociate at low pH. p62 is processed at the last step, presumably to avoid E1 fusion activation before its final export to cell surface. E2 C-terminus contains a transitory transmembrane that would be disrupted by palmitoylation, resulting in reorientation of the C-terminal tail from lumenal to cytoplasmic side. This step is critical since E2 C-terminus is involved in budding by interacting with capsid proteins. This release of E2 C-terminus in cytoplasm occurs lately in protein export, and precludes premature assembly of particles at the endoplasmic reticulum membrane. Its function is as follows. Constitutive membrane protein involved in virus glycoprotein processing, cell permeabilization, and the budding of viral particles. Disrupts the calcium homeostasis of the cell, probably at the endoplasmic reticulum level. This leads to cytoplasmic calcium elevation. Because of its lipophilic properties, the 6K protein is postulated to influence the selection of lipids that interact with the transmembrane domains of the glycoproteins, which, in turn, affects the deformability of the bilayer required for the extreme curvature that occurs as budding proceeds. Present in low amount in virions, about 3% compared to viral glycoproteins. In terms of biological role, class II viral fusion protein. Fusion activity is inactive as long as E1 is bound to E2 in mature virion. After virus attachment to target cell and endocytosis, acidification of the endosome would induce dissociation of E1/E2 heterodimer and concomitant trimerization of the E1 subunits. This E1 trimer is fusion active, and promotes release of viral nucleocapsid in cytoplasm after endosome and viral membrane fusion. Efficient fusion requires the presence of cholesterol and sphingolipid in the target membrane. Fusion is optimal at levels of about 1 molecule of cholesterol per 2 molecules of phospholipids, and is specific for sterols containing a 3-beta-hydroxyl group. In Aedes (Human), this protein is Structural polyprotein.